Consider the following 311-residue polypeptide: Aspartate carbamoyltransferase catalytic subunit (311 aa).

2 residues coordinate carbamoyl phosphate: Arg-55 and Thr-56. Lys-85 is an L-aspartate binding site. Carbamoyl phosphate-binding residues include Arg-106, His-135, and Gln-138. Arg-168 and Arg-230 together coordinate L-aspartate. The carbamoyl phosphate site is built by Leu-268 and Pro-269.

This sequence belongs to the aspartate/ornithine carbamoyltransferase superfamily. ATCase family. As to quaternary structure, heterododecamer (2C3:3R2) of six catalytic PyrB chains organized as two trimers (C3), and six regulatory PyrI chains organized as three dimers (R2).

The catalysed reaction is carbamoyl phosphate + L-aspartate = N-carbamoyl-L-aspartate + phosphate + H(+). It participates in pyrimidine metabolism; UMP biosynthesis via de novo pathway; (S)-dihydroorotate from bicarbonate: step 2/3. Catalyzes the condensation of carbamoyl phosphate and aspartate to form carbamoyl aspartate and inorganic phosphate, the committed step in the de novo pyrimidine nucleotide biosynthesis pathway. This chain is Aspartate carbamoyltransferase catalytic subunit, found in Escherichia coli (strain 55989 / EAEC).